Here is a 918-residue protein sequence, read N- to C-terminus: Calcium-transporting ATPase type 2C member 1 (918 aa).

Residues 1–78 (MKVARFQKIP…EPLWKKYISQ (78 aa)) are Cytoplasmic-facing. A helical membrane pass occupies residues 79 to 95 (FKNPLIMLLLASAVISI). Topologically, residues 96–99 (LMRQ) are extracellular. A helical transmembrane segment spans residues 100–121 (FDDAVSITVAIVIVVTVAFVQE). The Cytoplasmic segment spans residues 122–262 (YRSEKSLEEL…PKTPLQKSMD (141 aa)). The chain crosses the membrane as a helical span at residues 263–282 (LLGKQLSFYSFGIIGIIMLV). Residues 283 to 294 (GWLLGKDILEMF) lie on the Extracellular side of the membrane. The chain crosses the membrane as a helical span at residues 295–316 (TISVSLAVAAIPEGLPIVVTVT). Residues 317–699 (LALGVMRMVK…EGKGIYNNIK (383 aa)) lie on the Cytoplasmic side of the membrane. Residue Asp349 is the 4-aspartylphosphate intermediate of the active site. Mg(2+) is bound by residues Asp643 and Asp647. The chain crosses the membrane as a helical span at residues 700–722 (NFVRFQLSTSIAALTLISLATLM). The Extracellular segment spans residues 723–727 (NFPNP). A helical transmembrane segment spans residues 728-751 (LNAMQILWINIIMDGPPAQSLGVE). The Cytoplasmic segment spans residues 752–775 (PVDKDVIRKPPRNWKDSILTKNLI). A helical membrane pass occupies residues 776–794 (LKILVSSIIIVCGTLFVFW). Residues 795-801 (RELRDNV) lie on the Extracellular side of the membrane. The chain crosses the membrane as a helical span at residues 802–827 (ITPRDTTMTFTCFVFFDMFNALSSRS). The Cytoplasmic portion of the chain corresponds to 828 to 842 (QTKSVFEIGLCSNKM). Residues 843 to 862 (FCYAVLGSIMGQLLVIYFPP) form a helical membrane-spanning segment. At 863–875 (LQKVFQTESLSIL) the chain is on the extracellular side. The helical transmembrane segment at 876-892 (DLLFLLGLTSSVCIVSE) threads the bilayer. The Cytoplasmic segment spans residues 893–918 (IIKKVERSREKVQKNAGSASSSFLEV).

This sequence belongs to the cation transport ATPase (P-type) (TC 3.A.3) family. Type IIA subfamily. As to quaternary structure, monomer. Homodimer. In terms of tissue distribution, expressed in hippocampal neurons in the CA3 region of the Amon's horn (at protein level). Expressed in brain, heart, lung, stomach, liver, colon and mammary gland.

It is found in the golgi apparatus. Its subcellular location is the trans-Golgi network membrane. It localises to the golgi stack membrane. It catalyses the reaction Ca(2+)(in) + ATP + H2O = Ca(2+)(out) + ADP + phosphate + H(+). The enzyme catalyses Mn(2+)(in) + ATP + H2O = Mn(2+)(out) + ADP + phosphate + H(+). ATP-driven pump that supplies the Golgi apparatus with Ca(2+) and Mn(2+) ions, both essential cofactors for processing and trafficking of newly synthesized proteins in the secretory pathway. Within a catalytic cycle, acquires Ca(2+) or Mn(2+) ions on the cytoplasmic side of the membrane and delivers them to the lumenal side. The transfer of ions across the membrane is coupled to ATP hydrolysis and is associated with a transient phosphorylation that shifts the pump conformation from inward-facing to outward-facing state. Plays a primary role in the maintenance of Ca(2+) homeostasis in the trans-Golgi compartment with a functional impact on Golgi and post-Golgi protein sorting as well as a structural impact on cisternae morphology. Responsible for loading the Golgi stores with Ca(2+) ions in keratinocytes, contributing to keratinocyte differentiation and epidermis integrity. Participates in Ca(2+) and Mn(2+) ions uptake into the Golgi store of hippocampal neurons and regulates protein trafficking required for neural polarity. May also play a role in the maintenance of Ca(2+) and Mn(2+) homeostasis and signaling in the cytosol while preventing cytotoxicity. This chain is Calcium-transporting ATPase type 2C member 1, found in Mus musculus (Mouse).